A 222-amino-acid polypeptide reads, in one-letter code: MEELTERQREILSFIVKETETRGFPPTIREIGEHMDIRSTNGVNDHLKALERKGYLNRGEQQSRSLVATKRARLLLGLGARKDSGMVEIPLLGKVAAGAPLLAQENMEDSVKIDSFLLGGVNGREVFALRVKGQSMIDDGIHDGDYLFVKKTPSAQPGEIVVALIEDEATVKRYYPEGDRIRFQPANATMQPIYVSRAEFRSTMILGQVVGVYRKLQGGRTP.

The segment at residues 28–48 (IREIGEHMDIRSTNGVNDHLK) is a DNA-binding region (H-T-H motif). Residues S135 and K172 each act as for autocatalytic cleavage activity in the active site.

Belongs to the peptidase S24 family. In terms of assembly, homodimer.

The enzyme catalyses Hydrolysis of Ala-|-Gly bond in repressor LexA.. Represses a number of genes involved in the response to DNA damage (SOS response), including recA and lexA. In the presence of single-stranded DNA, RecA interacts with LexA causing an autocatalytic cleavage which disrupts the DNA-binding part of LexA, leading to derepression of the SOS regulon and eventually DNA repair. In Myxococcus xanthus (strain DK1622), this protein is LexA repressor.